The following is a 451-amino-acid chain: Tubulin alpha-2 chain (451 aa).

Q11 is a binding site for GTP. An N6-acetyllysine modification is found at K40. The GTP site is built by E71, S140, G144, T145, T179, N206, and N228. Residue E71 participates in Mg(2+) binding. The active site involves E254. Residues Y432–Y451 are disordered.

Belongs to the tubulin family. As to quaternary structure, dimer of alpha and beta chains. A typical microtubule is a hollow water-filled tube with an outer diameter of 25 nm and an inner diameter of 15 nM. Alpha-beta heterodimers associate head-to-tail to form protofilaments running lengthwise along the microtubule wall with the beta-tubulin subunit facing the microtubule plus end conferring a structural polarity. Microtubules usually have 13 protofilaments but different protofilament numbers can be found in some organisms and specialized cells. Mg(2+) serves as cofactor. Post-translationally, undergoes a tyrosination/detyrosination cycle, the cyclic removal and re-addition of a C-terminal tyrosine residue by the enzymes tubulin tyrosine carboxypeptidase (TTCP) and tubulin tyrosine ligase (TTL), respectively. Acetylation of alpha chains at Lys-40 stabilizes microtubules and affects affinity and processivity of microtubule motors. This modification has a role in multiple cellular functions, ranging from cell motility, cell cycle progression or cell differentiation to intracellular trafficking and signaling.

The protein localises to the cytoplasm. The protein resides in the cytoskeleton. The enzyme catalyses GTP + H2O = GDP + phosphate + H(+). Functionally, tubulin is the major constituent of microtubules, a cylinder consisting of laterally associated linear protofilaments composed of alpha- and beta-tubulin heterodimers. Microtubules grow by the addition of GTP-tubulin dimers to the microtubule end, where a stabilizing cap forms. Below the cap, tubulin dimers are in GDP-bound state, owing to GTPase activity of alpha-tubulin. This chain is Tubulin alpha-2 chain, found in Homarus americanus (American lobster).